The following is a 1081-amino-acid chain: Cellulose synthase A catalytic subunit 1 [UDP-forming] (1081 aa).

Met1 is subject to N-acetylmethionine. At 1–270 (MEASAGLVAG…SRVVPIPSSR (270 aa)) the chain is on the cytoplasmic side. Cys39, Cys42, Cys58, Cys61, Cys66, Cys69, Cys81, and Cys84 together coordinate Zn(2+). The segment at 39-85 (CQICGDDVGLAETGDVFVACNECAFPVCRPCYEYERKDGTQCCPQCK) adopts an RING-type; degenerate zinc-finger fold. The interval 118–195 (GANKARHQRH…RQPVPVRIVD (78 aa)) is disordered. Over residues 127–139 (HGEEFSSSSRHES) the composition is skewed to basic and acidic residues. Positions 158 to 168 (PDTQSVRTTSG) are enriched in polar residues. Residues 271–291 (LTPYRVVIILRLIILCFFLQY) form a helical membrane-spanning segment. Residues 292–299 (RTTHPVKN) lie on the Extracellular side of the membrane. A helical membrane pass occupies residues 300–320 (AYPLWLTSVICEIWFAFSWLL). At 321–856 (DQFPKWYPIN…LLERIAYINT (536 aa)) the chain is on the cytoplasmic side. UDP-alpha-D-glucose contacts are provided by Ser359, Lys365, Glu366, and Asp395. Asp395 is a catalytic residue. A coiled-coil region spans residues 449-476 (VKERRAMKREYEEFKVRINALVAKAQKI). UDP-alpha-D-glucose is bound at residue Lys536. Positions 537 and 561 each coordinate Mn(2+). Residue Asp780 is part of the active site. The chain crosses the membrane as a helical span at residues 857–877 (IVYPITSIPLIAYCILPAFCL). At 878-889 (ITDRFIIPEISN) the chain is on the extracellular side. The chain crosses the membrane as a helical span at residues 890–910 (YASIWFILLFISIAVTGILEL). At 911–925 (RWSGVSIEDWWRNEQ) the chain is on the cytoplasmic side. The chain crosses the membrane as a helical span at residues 926–946 (FWVIGGTSAHLFAVFQGLLKV). Over 947–976 (LAGIDTNFTVTSKATDEDGDFAELYIFKWT) the chain is Extracellular. An N-linked (GlcNAc...) asparagine glycan is attached at Asn953. Residues 977 to 997 (ALLIPPTTVLLVNLIGIVAGV) traverse the membrane as a helical segment. Residues 998 to 1008 (SYAVNSGYQSW) are Cytoplasmic-facing. A helical membrane pass occupies residues 1009 to 1029 (GPLFGKLFFALWVIAHLYPFL). Residues 1030–1038 (KGLLGRQNR) are Extracellular-facing. The chain crosses the membrane as a helical span at residues 1039–1059 (TPTIVIVWSVLLASIFSLLWV). At 1060–1081 (RINPFVDANPNANNFNGKGGVF) the chain is on the cytoplasmic side.

It belongs to the glycosyltransferase 2 family. Plant cellulose synthase subfamily. In terms of assembly, interacts with CESA3 and CESA6. Assembly with CESA3 and CESA6 is required for functional complex in primary cell wall cellulose synthesis. Interacts with STL1 and STL2, but not with GOT1. Binds to CSI1. Interacts with PAT24/TIP1. Zn(2+) serves as cofactor. It depends on Mn(2+) as a cofactor. In terms of processing, S-acylated. As to expression, expressed in germinating seeds, seedlings, roots, stems, shoots leaves and flowers, but not in mature flowers.

Its subcellular location is the cell membrane. The catalysed reaction is [(1-&gt;4)-beta-D-glucosyl](n) + UDP-alpha-D-glucose = [(1-&gt;4)-beta-D-glucosyl](n+1) + UDP + H(+). Its pathway is glycan metabolism; plant cellulose biosynthesis. In terms of biological role, catalytic subunit of cellulose synthase terminal complexes ('rosettes'), required for beta-1,4-glucan microfibril crystallization, a major mechanism of the cell wall formation. Involved in the primary cell wall formation. Required during embryogenesis for cell elongation, orientation of cell expansion and complex cell wall formations, such as interdigitated pattern of epidermal pavement cells, stomatal guard cells and trichomes. Plays a role in lateral roots formation, but seems not necessary for the development of tip-growing cells such as root hairs. The presence of each protein CESA1 and CESA6 is critical for cell expansion after germination. This Arabidopsis thaliana (Mouse-ear cress) protein is Cellulose synthase A catalytic subunit 1 [UDP-forming].